The chain runs to 257 residues: Nopaline permease ATP-binding protein P (257 aa).

One can recognise an ABC transporter domain in the interval 8–253 (LVAEDVHKNF…PTSPRCRAFL (246 aa)). 40–47 (GSSGSGKS) contributes to the ATP binding site.

It belongs to the ABC transporter superfamily.

It localises to the cell inner membrane. Component of the nopaline active transport system probably consisting of four subunits: Q, M, P and T. This system is also capable of transporting octopine provided that catabolic functions are induced with nopaline. The sequence is that of Nopaline permease ATP-binding protein P (nocP) from Agrobacterium fabrum (strain C58 / ATCC 33970) (Agrobacterium tumefaciens (strain C58)).